The sequence spans 174 residues: Ribosome maturation factor RimM (174 aa).

Positions 97–169 constitute a PRC barrel domain; that stretch reads PDTYYDHQLE…ILEIDPPDGL (73 aa).

Belongs to the RimM family. In terms of assembly, binds ribosomal protein uS19.

The protein resides in the cytoplasm. Functionally, an accessory protein needed during the final step in the assembly of 30S ribosomal subunit, possibly for assembly of the head region. Essential for efficient processing of 16S rRNA. May be needed both before and after RbfA during the maturation of 16S rRNA. It has affinity for free ribosomal 30S subunits but not for 70S ribosomes. This is Ribosome maturation factor RimM from Mycobacterium ulcerans (strain Agy99).